Reading from the N-terminus, the 138-residue chain is Phospholipase A2 homolog crotoxin acid subunit CA (138 aa).

A signal peptide spans 1–37; sequence MRALWIVAVLLVGVEGSLVEFETLMMKIAGRSGISYY. 8 disulfides stabilise this stretch: C42/C131, C44/C60, C59/C111, C65/C138, C66/C104, C73/C97, C91/C102, and C131/C138. Positions 79-82 are excised as a propeptide; sequence VYTY. At Q84 the chain carries Pyrrolidone carboxylic acid. Positions 119–124 are excised as a propeptide; sequence YDYKYL. Position 125 is a pyrrolidone carboxylic acid (Q125).

The protein belongs to the phospholipase A2 family. Group II subfamily. D49 sub-subfamily. As to quaternary structure, heterodimer of one of the acidic (CA1, CA2, CA3 or CA4) and one of the basic (CBa1, CBa2, CBb, CBc or CBd) subunits; non-covalently linked. The acidic subunit is non-toxic, without enzymatic activity and comprises 3 peptides that are cross-linked by 5 disulfide bridges. The basic subunit is toxic, has phospholipase A2 activity and is composed of a single chain. Multiple variants of each subunit give different crotoxin complexes that can be subdivided into 2 classes: (1) those of high toxicity, low PLA2 activity (CBb, CBc and CBd linked with high affinity to any CA) and high stability (K(d)=4.5 nM) and (2) those of moderate toxicity, high PLA2 activity (CBa2 linked with low affinity to any CA) and low stability (K(d)=25 nM). Expressed by the venom gland.

It is found in the secreted. CAalpha-CAbeta-CAgamma: The acidic subunit of crotoxin (CA) is a heterotrimer of three disulfide-linked chains generated by post-translational maturation of a PLA2-like precursor. CA has no PLA2 activity and is not neurotoxic by itself, but plays several important functions in the crotoxin complex by increasing the lethal potency of the uncomplexed CB subunit. It acts by physically occluding the hydrophobic interfacial binding surface (IBS) of CB. This effect decreases the adsorption of CB to phospholipid membranes, targeting the crotoxin complex to reach the specific presynaptic receptor (R48) at the neuromuscular junction. It also prevents the formation of the reactive CB dimer. Moreover, the CA subunit inhibits the catalytic activity by partially masking the catalytic site of CB and inhibits its anticoagulant activity. Functionally, heterodimer CA-CB: Crotoxin is a potent presynaptic neurotoxin that possesses phospholipase A2 (PLA2) activity and exerts a lethal action by blocking neuromuscular transmission. It consists of a non-covalent association of a basic and weakly toxic PLA2 subunit (CBa2, CBb, CBc, or CBd), with a small acidic, non-enzymatic and non-toxic subunit (CA1, CA2, CA3 or CA4). The complex acts by binding to a specific 48-kDa protein (R48/CAPT) receptor located on presynaptic membranes, forming a transient ternary complex CA-CB-R48, followed by dissociation of the CA-CB complex and release of the CA subunit. At equilibrium, only the CB subunits remain associated with the specific crotoxin receptor. In addition to neurotoxicity, crotoxin has been found to exert myotoxicity, nephrotoxicity, and cardiovascular toxicity. Moreover, anti-inflammatory, immunomodulatory, anti-tumor and analgesic effects of crotoxin have also been reported. In terms of biological role, found in the venom as a monomer and stabilized by one disulfide bond (Cys-131 and Cys-138). This peptide induces potent antinociceptive effects in acute and chronic pain models. This effect is mediated by the release of peripheral dynorphin A, an endogenous agonist of kappa-opioid receptors, and this release is dependent on cannabinoid receptor CB2 activation. The sequence is that of Phospholipase A2 homolog crotoxin acid subunit CA from Crotalus durissus terrificus (South American rattlesnake).